We begin with the raw amino-acid sequence, 2210 residues long: RNA-directed RNA polymerase L (2210 aa).

An endonuclease region spans residues Arg26–Cys284. Mn(2+)-binding residues include Glu51, Asp89, and Glu102. Residue Lys115 is part of the active site. Positions Cys1171 to Ile1368 constitute a RdRp catalytic domain. Asp1329 contributes to the Mg(2+) binding site.

The protein belongs to the Bunyavirales RNA polymerase family. As to quaternary structure, homomultimer; the oligomeric structure is essential for the polymerase activity. Interacts with nucleoprotein N. Interacts with protein Z; this interaction inhibits viral transcription and replication, Z partially blocks the product exit tunnel for the releasing nascent RNA product. The cofactor is Mn(2+). Mg(2+) serves as cofactor.

The protein resides in the virion. The protein localises to the host cytoplasm. It carries out the reaction RNA(n) + a ribonucleoside 5'-triphosphate = RNA(n+1) + diphosphate. In terms of biological role, RNA-dependent RNA polymerase, which is responsible for the replication and transcription of the viral RNA genome using antigenomic RNA as an intermediate. During transcription, synthesizes subgenomic RNAs and assures their capping by a cap-snatching mechanism, which involves the endonuclease activity cleaving the host capped pre-mRNAs. These short capped RNAs are then used as primers for viral transcription. The 3'-end of subgenomic mRNAs molecules are heterogeneous and not polyadenylated. The replicase function is to direct synthesis of antigenomic and genomic RNA which are encapsidated and non capped. As a consequence of the use of the same enzyme for both transcription and replication, these mechanisms need to be well coordinated. These processes may be regulated by proteins N and Z in a dose-dependent manner. Z protein inhibits the viral polymerase L und thus the viral transcription and RNA synthesis. This Junin mammarenavirus (JUNV) protein is RNA-directed RNA polymerase L.